The chain runs to 548 residues: 1,3-beta-glucanosyltransferase gel4 (548 aa).

Residues 1-25 form the signal peptide; that stretch reads MKFVYAAAGASLVGSALATLPVIEA. Residues N51 and N69 are each glycosylated (N-linked (GlcNAc...) asparagine). A disulfide bridge connects residues C88 and C117. (1,3-beta-D-glucosyl)n-binding positions include Y106, 133-141, N174, and E175; that span reads SAPSESINR. The active-site Proton donor is the E175. Residue N181 is glycosylated (N-linked (GlcNAc...) asparagine). Positions 217 and 222 each coordinate (1,3-beta-D-glucosyl)n. Disulfide bonds link C231/C364, C249/C280, C386/C437, C395/C461, and C414/C419. The active-site Nucleophile is E277. Y309 contacts (1,3-beta-D-glucosyl)n. The N-linked (GlcNAc...) asparagine glycan is linked to N425. A lipid anchor (GPI-like-anchor amidated alanine) is attached at A519. A propeptide spans 520–548 (removed in mature form); it reads SPMAVKVGNWQFGAYIATALFAGVGMLVL.

It belongs to the glycosyl hydrolase 72 family. In terms of processing, the GPI-like anchor contains a phosphoceramide lipid group.

The protein localises to the cell membrane. Functionally, splits internally a 1,3-beta-glucan molecule and transfers the newly generated reducing end (the donor) to the non-reducing end of another 1,3-beta-glucan molecule (the acceptor) forming a 1,3-beta linkage, resulting in the elongation of 1,3-beta-glucan chains in the cell wall. Involved in cell wall morphogenesis. The chain is 1,3-beta-glucanosyltransferase gel4 (gel4) from Aspergillus fumigatus (strain ATCC MYA-4609 / CBS 101355 / FGSC A1100 / Af293) (Neosartorya fumigata).